Reading from the N-terminus, the 565-residue chain is UV-stimulated scaffold protein A homolog (565 aa).

The segment at 11 to 156 (RKNLNRILQE…VTLRKTKFVD (146 aa)) is VHS-like. Residues 155–215 (VDYENGEKKI…ELETTMEMLV (61 aa)) are a coiled coil. The UVSSA-type zinc-finger motif lies at 441-468 (DRECLAKLPSGALCKRKDMFKCPLHGPL). Zn(2+) is bound by residues cysteine 444, cysteine 454, cysteine 462, and histidine 465. Positions 480-510 (DEDRLKEIDRKERKRLKEAEEFSRKIVKEYE) form a coiled coil. 2 disordered regions span residues 510-530 (ESKT…SRLQ) and 542-565 (VSAD…FSHL).

It belongs to the UVSSA family.

It is found in the chromosome. In terms of biological role, factor involved in transcription-coupled nucleotide excision repair (TC-NER) in response to UV damage. TC-NER allows RNA polymerase II-blocking lesions to be rapidly removed from the transcribed strand of active genes. The sequence is that of UV-stimulated scaffold protein A homolog from Caenorhabditis briggsae.